The following is a 361-amino-acid chain: Probable S-adenosylmethionine-dependent methyltransferase At5g38780 (361 aa).

7 residues coordinate S-adenosyl-L-homocysteine: tyrosine 19, cysteine 64, asparagine 69, aspartate 106, leucine 107, serine 135, and phenylalanine 136. Asparagine 174, glutamate 260, phenylalanine 262, and asparagine 263 together coordinate Mg(2+).

Belongs to the methyltransferase superfamily. Type-7 methyltransferase family. As to quaternary structure, homodimer. Mg(2+) is required as a cofactor.

The protein is Probable S-adenosylmethionine-dependent methyltransferase At5g38780 of Arabidopsis thaliana (Mouse-ear cress).